We begin with the raw amino-acid sequence, 749 residues long: Adenosylcobalamin-dependent ribonucleoside-triphosphate reductase (749 aa).

An intrachain disulfide couples Cys-124 to Cys-427. An effector region-1 region spans residues 152-163 (SMPFSFMFDQLM). The tract at residues 173–321 (TPNNVHQMPV…MGNMIGKTVV (149 aa)) is effector region-2. Active-site residues include Cys-416 and Glu-418. Residues 573–634 (FHYARYLIQR…EPAFASAGEV (62 aa)) are adenosylcobalamin-binding-1. The interval 693-734 (FKQAPKEPIDAATYDAKCQEITADVAEKFAAMTGNHDQKDIE) is adenosylcobalamin-binding-2.

This sequence belongs to the class II ribonucleoside-triphosphate reductase family. Monomer. The cofactor is adenosylcob(III)alamin.

The catalysed reaction is a 2'-deoxyribonucleoside 5'-triphosphate + [thioredoxin]-disulfide + H2O = a ribonucleoside 5'-triphosphate + [thioredoxin]-dithiol. Its activity is regulated as follows. Allosterically regulated by ATP and dNTP. This is Adenosylcobalamin-dependent ribonucleoside-triphosphate reductase (rtpR) from Levilactobacillus brevis (strain ATCC 367 / BCRC 12310 / CIP 105137 / JCM 1170 / LMG 11437 / NCIMB 947 / NCTC 947) (Lactobacillus brevis).